Here is a 492-residue protein sequence, read N- to C-terminus: Dipeptide permease D (492 aa).

A run of 13 helical transmembrane segments spans residues 14–34 (VVAL…LLIL), 49–69 (ALFS…GYLA), 91–111 (LVLG…AIIV), 138–158 (GGFS…PIAC), 167–187 (WAMG…IFLC), 212–232 (NWGW…VLFW), 236–256 (SVYA…RIYL), 269–289 (LIVV…QGGS), 312–332 (MFQS…AWLV), 344–364 (IWGK…ILTL), 379–399 (LMVL…PVAM), 413–433 (VLTG…AGVI), and 458–478 (VFSQ…VIWL).

The protein belongs to the major facilitator superfamily. Proton-dependent oligopeptide transporter (POT/PTR) (TC 2.A.17) family. DtpD subfamily.

The protein resides in the cell inner membrane. Its function is as follows. Probable proton-dependent permease that transports dipeptides. This chain is Dipeptide permease D, found in Klebsiella pneumoniae subsp. pneumoniae (strain ATCC 700721 / MGH 78578).